A 165-amino-acid polypeptide reads, in one-letter code: Large ribosomal subunit protein uL10 (165 aa).

This sequence belongs to the universal ribosomal protein uL10 family. In terms of assembly, part of the ribosomal stalk of the 50S ribosomal subunit. The N-terminus interacts with L11 and the large rRNA to form the base of the stalk. The C-terminus forms an elongated spine to which L12 dimers bind in a sequential fashion forming a multimeric L10(L12)X complex.

Its function is as follows. Forms part of the ribosomal stalk, playing a central role in the interaction of the ribosome with GTP-bound translation factors. The polypeptide is Large ribosomal subunit protein uL10 (Mycoplasmopsis synoviae (strain 53) (Mycoplasma synoviae)).